Reading from the N-terminus, the 279-residue chain is Tryptophan synthase alpha chain (279 aa).

Catalysis depends on proton acceptor residues Glu-50 and Asp-61.

The protein belongs to the TrpA family. Tetramer of two alpha and two beta chains.

The catalysed reaction is (1S,2R)-1-C-(indol-3-yl)glycerol 3-phosphate + L-serine = D-glyceraldehyde 3-phosphate + L-tryptophan + H2O. It participates in amino-acid biosynthesis; L-tryptophan biosynthesis; L-tryptophan from chorismate: step 5/5. In terms of biological role, the alpha subunit is responsible for the aldol cleavage of indoleglycerol phosphate to indole and glyceraldehyde 3-phosphate. In Mesorhizobium japonicum (strain LMG 29417 / CECT 9101 / MAFF 303099) (Mesorhizobium loti (strain MAFF 303099)), this protein is Tryptophan synthase alpha chain.